Reading from the N-terminus, the 209-residue chain is Thymidylate kinase (209 aa).

An ATP-binding site is contributed by 10–17 (GLDGAGKS).

This sequence belongs to the thymidylate kinase family.

It carries out the reaction dTMP + ATP = dTDP + ADP. Functionally, phosphorylation of dTMP to form dTDP in both de novo and salvage pathways of dTTP synthesis. The polypeptide is Thymidylate kinase (Francisella tularensis subsp. novicida (strain U112)).